A 302-amino-acid polypeptide reads, in one-letter code: TATA-box-binding protein (302 aa).

Disordered stretches follow at residues Met1–Thr22 and Ser50–Gln81. Low complexity predominate over residues Ser50 to Gly70. 2 repeat units span residues Leu128 to Val204 and Ile218 to Leu295.

It belongs to the TBP family. In terms of tissue distribution, enriched in testis but hardly detectable in the ovary (at protein level).

It localises to the nucleus. General transcription factor that functions at the core of the DNA-binding multiprotein factor TFIID. Binding of TFIID to the TATA box is the initial transcriptional step of the pre-initiation complex (PIC), playing a role in the activation of eukaryotic genes transcribed by RNA polymerase II. Members of the TBP family are differentially required for transcription and development during early embryogenesis. Regulates mRNA levels in the early embryo by both transcriptional and post-transcriptional mechanisms. Required for transcription of a subset of genes at the mid-blastula transition (MBT). Negatively regulates the expression of other embryonic genes, including autoregulation of the tbp promoter itself. Also functions within a transcription-dependent mechanism to direct the temporally-regulated degradation of a subset of maternal mRNAs after the MBT. This is part of a general mechanism to regulate the maternal to zygotic transition and is required for normal embryonic development. Binds to promoters of a subset of genes. Required for gastrulation. In Danio rerio (Zebrafish), this protein is TATA-box-binding protein.